A 204-amino-acid chain; its full sequence is Transmembrane protein 186 (204 aa).

The Mitochondrial matrix portion of the chain corresponds to Met-1–Lys-69. A helical membrane pass occupies residues Val-70–Gly-90. The Mitochondrial intermembrane segment spans residues Gln-91–Asp-95. The helical transmembrane segment at Ala-96–Tyr-116 threads the bilayer. Topologically, residues Ala-117–Asn-204 are mitochondrial matrix.

This sequence belongs to the TMEM186 family. In terms of assembly, associates with mitochondrial complex I assembly intermediates during its biogenesis.

It localises to the mitochondrion inner membrane. Its function is as follows. As part of the MCIA complex, required for efficient assembly of the mitochondrial complex I. The sequence is that of Transmembrane protein 186 from Drosophila melanogaster (Fruit fly).